Reading from the N-terminus, the 103-residue chain is UPF0091 protein PH0944 (103 aa).

It belongs to the UPF0091 family.

The sequence is that of UPF0091 protein PH0944 from Pyrococcus horikoshii (strain ATCC 700860 / DSM 12428 / JCM 9974 / NBRC 100139 / OT-3).